We begin with the raw amino-acid sequence, 95 residues long: Co-chaperonin GroES (95 aa).

It belongs to the GroES chaperonin family. As to quaternary structure, heptamer of 7 subunits arranged in a ring. Interacts with the chaperonin GroEL.

The protein localises to the cytoplasm. Its function is as follows. Together with the chaperonin GroEL, plays an essential role in assisting protein folding. The GroEL-GroES system forms a nano-cage that allows encapsulation of the non-native substrate proteins and provides a physical environment optimized to promote and accelerate protein folding. GroES binds to the apical surface of the GroEL ring, thereby capping the opening of the GroEL channel. In Chlorobaculum tepidum (strain ATCC 49652 / DSM 12025 / NBRC 103806 / TLS) (Chlorobium tepidum), this protein is Co-chaperonin GroES.